The following is a 682-amino-acid chain: Pneumocandin biosynthesis cluster protein B (682 aa).

Low complexity predominate over residues 63 to 73 (SSLSSTEVTSS). Disordered regions lie at residues 63 to 86 (SSLS…DAPE), 107 to 129 (QNTP…DTNQ), and 251 to 358 (SEST…SPAN). 2 stretches are compositionally biased toward polar residues: residues 257-279 (NTGS…SHSS) and 310-320 (PRQTTEATPCD). A compositionally biased stretch (basic and acidic residues) spans 335–349 (PERRSMKMVRKEARD).

In terms of biological role, part of the gene cluster that mediates the biosynthesis of pneumocandins, lipohexapeptides of the echinocandin family that prevent fungal cell wall formation by non-competitive inhibition of beta-1,3-glucan synthase. The 10,12-dimethylmyristoyl side chain is synthesized by the reducing polyketide synthase gloL/GLPKS4. The thioesterase gloN/GLHYD exclusively interacts with gloL/GLPKS4 to maintain turnover of the polyketide side chain. The 10R,12S-dimethylmyristic acid is then transferred to the first thiolation domain of the nonribosomal peptide synthetase gloA/GLNRPS4 by the acyl-AMP ligase gloD/GLligase, followed by its acylation to L-ornithine to trigger elongation of the cyclic hexapeptide. L-ornithine, 4R-hydroxyl-L-proline (generated from L-proline by the dioxygenase gloF/GLOXY2), 3S-hydroxyl-L-homotyrosine (generated by gloG/GLHtyB, gloH/GLHtyA, gloI/GLHtyC, gloJ/GLHtyD and hydroxylated at C-3 by the dioxygenase gloM/GLOXY1), 3R-hydroxyl-L-glutamine (generated from L-glutamine probably by the dioxygenase gloE/GLOXY3) and 3S-hydroxyl-L-proline (generated from L-proline by the dioxygenase gloF/GLOXY2 to yield pneumocandin B0), or 3S-hydroxyl-4S-methyl-L-proline (generated from L-leucine by the dioxygenase gloC/GLOXY4 to yield pneumocandin A0) are sequentially added to the growing chain. The last C domain of gloA/GLNRPS4 is proposed to be responsible for cyclization by condensation to form the peptide bond between L-ornithine and 3S-hydroxyl-4S-methyl-L-proline (for pneumocandin A0) or 3S-hydroxyl-L-proline (for pneumocandin B0). Finally, the subsequent C-4 hydroxylation of 3S-hydroxyl-L-homotyrosine and L-ornithine dihydroxylation at C-4 and C-5 are performed by the cytochrome P450 monooxygenases gloP/GLP450-1 and gloO/GLP450-2, respectively. The sequence is that of Pneumocandin biosynthesis cluster protein B from Glarea lozoyensis (strain ATCC 20868 / MF5171).